We begin with the raw amino-acid sequence, 588 residues long: Cyclomaltodextrinase (588 aa).

The substrate site is built by histidine 247 and arginine 326. Aspartate 328 acts as the Nucleophile in catalysis. Residue glutamate 357 is the Proton donor of the active site. Substrate contacts are provided by residues 423–424 (HD), aspartate 468, and arginine 472.

Belongs to the glycosyl hydrolase 13 family. In terms of assembly, exists as a monomer or a homodimer in solution. Homodimer is more active and stable than the monomer.

The catalysed reaction is cyclomaltodextrin + H2O = linear maltodextrin. Its activity is regulated as follows. No metal dependence, but Mn(2+) increases the activity with alpha-cyclodextrin as substrate. No effect on the activity with presence or absence of Ca(2+), Zn(2+), Tween-20 or EDTA. Its function is as follows. Hydrolyzes alpha-, beta- and gamma-cyclodextrins with the highest activity with alpha-cyclodextrin (cyclomaltohexaose). Pullulan is the preferred substrate from linear substrates. Maltose is a major product of these reactions. Is also able to hydrolyze maltotriose and acarbose, and transglycosylate their hydrolytic products. Major reaction products of maltotriose and of acarbose are maltose and glucose, and glucose and pseudotrisaccharide, respectively. No activity with glucose or maltose as substrate. The sequence is that of Cyclomaltodextrinase from Geobacillus thermopakistaniensis (strain MAS1).